The chain runs to 137 residues: Putative pre-16S rRNA nuclease (137 aa).

It belongs to the YqgF nuclease family.

It is found in the cytoplasm. Functionally, could be a nuclease involved in processing of the 5'-end of pre-16S rRNA. The sequence is that of Putative pre-16S rRNA nuclease from Actinobacillus pleuropneumoniae serotype 5b (strain L20).